We begin with the raw amino-acid sequence, 157 residues long: UPF0587 protein C2D10.03c (157 aa).

Residues C34, C37, C68, and C71 each contribute to the Zn(2+) site.

It belongs to the UPF0587 family.

This chain is UPF0587 protein C2D10.03c, found in Schizosaccharomyces pombe (strain 972 / ATCC 24843) (Fission yeast).